The sequence spans 262 residues: Glutamine-binding protein (262 aa).

An N-terminal signal peptide occupies residues methionine 1 to glycine 26. The N-palmitoyl cysteine moiety is linked to residue cysteine 27. Cysteine 27 carries S-diacylglycerol cysteine lipidation.

It belongs to the bacterial solute-binding protein 3 family.

It localises to the cell membrane. Functionally, involved in glutamine-transport system. Interacts with the glutamine-transport system GlnPQ. The sequence is that of Glutamine-binding protein (glnH) from Geobacillus stearothermophilus (Bacillus stearothermophilus).